A 565-amino-acid polypeptide reads, in one-letter code: Proline--tRNA ligase (565 aa).

This sequence belongs to the class-II aminoacyl-tRNA synthetase family. ProS type 1 subfamily. In terms of assembly, homodimer.

Its subcellular location is the cytoplasm. It carries out the reaction tRNA(Pro) + L-proline + ATP = L-prolyl-tRNA(Pro) + AMP + diphosphate. Catalyzes the attachment of proline to tRNA(Pro) in a two-step reaction: proline is first activated by ATP to form Pro-AMP and then transferred to the acceptor end of tRNA(Pro). As ProRS can inadvertently accommodate and process non-cognate amino acids such as alanine and cysteine, to avoid such errors it has two additional distinct editing activities against alanine. One activity is designated as 'pretransfer' editing and involves the tRNA(Pro)-independent hydrolysis of activated Ala-AMP. The other activity is designated 'posttransfer' editing and involves deacylation of mischarged Ala-tRNA(Pro). The misacylated Cys-tRNA(Pro) is not edited by ProRS. The sequence is that of Proline--tRNA ligase from Francisella tularensis subsp. tularensis (strain FSC 198).